Here is a 186-residue protein sequence, read N- to C-terminus: Ribosome-recycling factor (186 aa).

This sequence belongs to the RRF family.

Its subcellular location is the cytoplasm. Functionally, responsible for the release of ribosomes from messenger RNA at the termination of protein biosynthesis. May increase the efficiency of translation by recycling ribosomes from one round of translation to another. This chain is Ribosome-recycling factor, found in Bartonella bacilliformis (strain ATCC 35685 / KC583 / Herrer 020/F12,63).